A 449-amino-acid polypeptide reads, in one-letter code: Glucose-6-phosphate isomerase (449 aa).

Glu291 acts as the Proton donor in catalysis. Active-site residues include His312 and Lys426.

The protein belongs to the GPI family.

It localises to the cytoplasm. It carries out the reaction alpha-D-glucose 6-phosphate = beta-D-fructose 6-phosphate. Its pathway is carbohydrate biosynthesis; gluconeogenesis. It participates in carbohydrate degradation; glycolysis; D-glyceraldehyde 3-phosphate and glycerone phosphate from D-glucose: step 2/4. Catalyzes the reversible isomerization of glucose-6-phosphate to fructose-6-phosphate. The chain is Glucose-6-phosphate isomerase from Streptococcus pyogenes serotype M1.